The following is a 244-amino-acid chain: ATP synthase subunit 4, mitochondrial (244 aa).

The N-terminal 36 residues, 1 to 36 (MASRLAKSAICAARVRPVLSSRTIPAAATTLTSTRS), are a transit peptide targeting the mitochondrion.

The protein belongs to the eukaryotic ATPase B chain family. As to quaternary structure, F-type ATPases have 2 components, CF(1) - the catalytic core - and CF(0) - the membrane proton channel. In yeast, the dimeric form of ATP synthase consists of 17 polypeptides: alpha, beta, gamma, delta, epsilon, 4 (B), 5 (OSCP), 6 (A), 8, 9 (C), d, E (Tim11), f, g, h, i/j and k.

It localises to the mitochondrion. The protein localises to the mitochondrion inner membrane. Mitochondrial membrane ATP synthase (F(1)F(0) ATP synthase or Complex V) produces ATP from ADP in the presence of a proton gradient across the membrane which is generated by electron transport complexes of the respiratory chain. F-type ATPases consist of two structural domains, F(1) - containing the extramembraneous catalytic core, and F(0) - containing the membrane proton channel, linked together by a central stalk and a peripheral stalk. During catalysis, ATP synthesis in the catalytic domain of F(1) is coupled via a rotary mechanism of the central stalk subunits to proton translocation. Part of the complex F(0) domain and the peripheric stalk, which acts as a stator to hold the catalytic alpha(3)beta(3) subcomplex and subunit a/ATP6 static relative to the rotary elements. The chain is ATP synthase subunit 4, mitochondrial (ATP4) from Paracoccidioides brasiliensis.